A 984-amino-acid chain; its full sequence is Respiratory nitrate reductase subunit alpha (984 aa).

The interval 1–43 (MSRNDASQLDDGETTAESPPDDQANDAPEVGDPPGDPVDADSG) is disordered. A compositionally biased stretch (acidic residues) spans 8 to 24 (QLDDGETTAESPPDDQA). Positions 103–167 (DSVSRSTHSV…CYTDYVNADQ (65 aa)) constitute a 4Fe-4S Mo/W bis-MGD-type domain. 4 residues coordinate [4Fe-4S] cluster: histidine 110, cysteine 114, cysteine 118, and cysteine 153. Aspartate 249 contributes to the Mo-bis(molybdopterin guanine dinucleotide) binding site.

It belongs to the prokaryotic molybdopterin-containing oxidoreductase family. In terms of assembly, probable multiprotein complex; a catalytic heterodimer of an alpha and beta chain is proposed to associate with additional subunits involved in membrane attachment and electron transfer. Requires [4Fe-4S] cluster as cofactor. Mo-bis(molybdopterin guanine dinucleotide) serves as cofactor. Exported by the Tat system.

Its subcellular location is the cell membrane. The catalysed reaction is nitrate + a quinol = a quinone + nitrite + H2O. Inhibited by cyanide, azide and antimycin A. Enzyme stability is not dependent on salt concentration. Functionally, the respiratory membrane-bound nitrate reductase enzyme complex plays a role in generation of metabolic energy by using nitrate as a terminal electron acceptor during anaerobic conditions. The alpha chain is the actual site of nitrate reduction. This is Respiratory nitrate reductase subunit alpha (narG) from Haloferax mediterranei (strain ATCC 33500 / DSM 1411 / JCM 8866 / NBRC 14739 / NCIMB 2177 / R-4) (Halobacterium mediterranei).